The following is a 72-amino-acid chain: Enterobactin biosynthesis protein YbdZ (72 aa).

This sequence belongs to the MbtH-like family.

Involved in the biosynthesis of the siderophore enterobactin (enterochelin), which is a macrocyclic trimeric lactone of N-(2,3-dihydroxybenzoyl)-serine. Plays a role in the catalytic function of EntF. It is required for adenylation of amino acids in non-ribosomal peptide biosynthesis. The polypeptide is Enterobactin biosynthesis protein YbdZ (Escherichia coli (strain K12)).